The sequence spans 188 residues: Archaemetzincin (188 aa).

Zn(2+) is bound at residue histidine 137. Glutamate 138 (proton acceptor) is an active-site residue. Residues histidine 141, histidine 147, cysteine 148, cysteine 153, cysteine 172, and cysteine 175 each contribute to the Zn(2+) site.

Belongs to the peptidase M54 family. Monomer. Zn(2+) is required as a cofactor.

Functionally, probable zinc metalloprotease whose natural substrate is unknown. The polypeptide is Archaemetzincin (Pyrococcus horikoshii (strain ATCC 700860 / DSM 12428 / JCM 9974 / NBRC 100139 / OT-3)).